The primary structure comprises 766 residues: Disabled homolog 2 (766 aa).

Residues 1–16 (MSNEVETSTTNGQPDQ) show a composition bias toward polar residues. A disordered region spans residues 1–36 (MSNEVETSTTNGQPDQQAAPKAPSKKEKKKGSEKTD). At S2 the chain carries N-acetylserine. S2 carries the phosphoserine modification. The region spanning 45–196 (GDGVKYKAKL…KAEENGSEAL (152 aa)) is the PID domain. Phosphotyrosine is present on Y170. S193 carries the phosphoserine modification. The segment at 230–447 (ESKDILLVDL…KPGRGRRTAK (218 aa)) is required for localization to clathrin-coated pits. Disordered regions lie at residues 284–482 (LNFF…NFLD), 596–630 (PPPTMSTQSSPQPMMSSVLATPPQPPPRNGPLKDI), 659–683 (RQPPLVPSRKGETPPSGTSSAFSSY), and 699–766 (DFDA…NPFA). 2 consecutive short sequence motifs (DPF) follow at residues 293–295 (DPF) and 298–300 (DPF). 2 stretches are compositionally biased toward polar residues: residues 303–334 (PDQSAPSSFDSLTSPDQKKASLSSSSTPQSKG) and 367–381 (PSSQTQQAVRTQNGV). A Phosphoserine modification is found at S323. Phosphoserine; in mitosis is present on residues S326 and S328. S401 is subject to Phosphoserine. Positions 467-480 (MSPTGQPAVPQSNF) are enriched in polar residues. Residues 600–612 (MSTQSSPQPMMSS) are compositionally biased toward low complexity. Residues 600-730 (MSTQSSPQPM…VLLGTKSADN (131 aa)) form a sufficient for interaction with GRB2 region. The tract at residues 617–625 (PPQPPPRNG) is required for interaction with CSK. The interval 647–766 (KEVKEMFKDF…HRSPFGNPFA (120 aa)) is required for interaction with MYO6. The segment at 661–669 (PPLVPSRKG) is required for interaction with GRB2 and CSK. At T671 the chain carries Phosphothreonine. The span at 673–683 (PSGTSSAFSSY) shows a compositional bias: polar residues. Positions 707-723 (NKINEPPKPAPRQGVLL) are sufficient for interaction with SH3KBP1 SH3 domain. S727 and S759 each carry phosphoserine. The segment covering 727–753 (SADNSLENPFSKGFSSSNPSVVSQPAS) has biased composition (polar residues).

In terms of assembly, interacts (via NPXY motif) with DAB2 (via PID domain). Can interact (via PID domain) with LDLR, APP, APLP1 and APLP2, and weakly with INPP5D (via NPXY motifs); the interaction is impaired by tyrosine phosphorylation of the respective NPXY motifs. Can weakly interact (via PID domain) with LRP1 (via NPXY motif); the interaction is enhanced by tyrosine phosphorylation of the NPXY motif. Interacts with LRP2 (via NPXY motif); the interaction is not affected by tyrosine phosphorylation of the NPXY motif. Interacts with clathrin; in vitro can assemble clathrin triskelia into polyhedral coats. Interacts with AP2A2, ITGB1, ITGB3, ITGB5, PIAS2, DAB2IP, NOSTRIN, FCHO1, DVL3 and EPS15L1. Interacts with SH3KBP1 (via SH3 domains). Interacts with GRB2; competes with SOS1 for binding to GRB2 and the interaction is enhanced by EGF and NT-3 stimulation. Isoform p96 interacts with EPS15 and ITSN1; isoform p67 does not interact with EPS15 and only weakly interacts with ITSN1. Interacts with MAP3K7; the interaction is induced by TGF-beta stimulation and may mediate TGF-beta stimulated JNK activation. Interacts with AXIN1 and PPP1CA; the interactions are mutually exclusive. Interacts with the globular tail of MYO6. Interacts (via DPF motifs) with FCHO2; the interaction is direct and required for DAB2-mediated LDLR endocytosis. Interacts with LRP6; the interaction involves LRP6 phosphorylation by CK2 and sequesters LRP6 towards clathrin-mediated endocytosis. Associates with the TGF-beta receptor complex. Interacts with SMAD2 and SMAD3; the interactions are enhanced upon TGF-beta stimulation. Interacts with GRB2; the interaction is enhanced by EGF and NT-3 stimulation. Interacts with SRC; the interaction is enhanced by EGF stimulation. In terms of processing, phosphorylated on serine residues in response to mitogenic growth-factor stimulation. Phosphorylation during mitosis is leading to membrane displacement. In terms of tissue distribution, isoform p96 and isoform p67 are expressed in adult kidney and fibroblasts with isoform p96 being the predominant form. Isoform p67 is the predominant isoform expressed in embryonic visceral endoderm.

The protein localises to the cytoplasmic vesicle. Its subcellular location is the clathrin-coated vesicle membrane. It is found in the membrane. It localises to the clathrin-coated pit. The protein resides in the cytoplasm. The protein localises to the nucleus. In terms of biological role, adapter protein that functions as a clathrin-associated sorting protein (CLASP) required for clathrin-mediated endocytosis of selected cargo proteins. Can bind and assemble clathrin, and binds simultaneously to phosphatidylinositol 4,5-bisphosphate (PtdIns(4,5)P2) and cargos containing non-phosphorylated NPXY internalization motifs, such as the LDL receptor, to recruit them to clathrin-coated pits. Can function in clathrin-mediated endocytosis independently of the AP-2 complex. Involved in endocytosis of integrin beta-1; this function seems to redundant with the AP-2 complex and seems to require DAB2 binding to endocytosis accessory EH domain-containing proteins such as EPS15, EPS15L1 and ITSN1. Involved in endocytosis of cystic fibrosis transmembrane conductance regulator/CFTR. Isoform p96 is involved in endocytosis of megalin/LRP2 lipoprotein receptor during embryonal development. Required for recycling of the TGF-beta receptor. Isoform p67 is not involved in LDL receptor endocytosis. Involved in CFTR trafficking to the late endosome. Involved in several receptor-mediated signaling pathways. Involved in TGF-beta receptor signaling and facilitates phosphorylation of the signal transducer SMAD2. Mediates TFG-beta-stimulated JNK activation. May inhibit the canoniocal Wnt/beta-catenin signaling pathway by stabilizing the beta-catenin destruction complex through a competing association with axin preventing its dephosphorylation through protein phosphatase 1 (PP1). Sequesters LRP6 towards clathrin-mediated endocytosis, leading to inhibition of Wnt/beta-catenin signaling. May activate non-canonical Wnt signaling. In cell surface growth factor/Ras signaling pathways proposed to inhibit ERK activation by interrupting the binding of GRB2 to SOS1 and to inhibit SRC by preventing its activating phosphorylation at 'Tyr-419'. Proposed to be involved in modulation of androgen receptor (AR) signaling mediated by SRC activation; seems to compete with AR for interaction with SRC. Plays a role in the CSF-1 signal transduction pathway. Plays a role in cellular differentiation. Involved in cell positioning and formation of visceral endoderm (VE) during embryogenesis and proposed to be required in the VE to respond to Nodal signaling coming from the epiblast. Required for the epithelial to mesenchymal transition, a process necessary for proper embryonic development. May be involved in myeloid cell differentiation and can induce macrophage adhesion and spreading. Isoform p67 may be involved in transcriptional regulation. May act as a tumor suppressor. This Mus musculus (Mouse) protein is Disabled homolog 2 (Dab2).